The following is a 233-amino-acid chain: MGQKVHPNGMRLGIIKKWNSVWFANTKDFADHLDSDYKVRQFLMKTLEKASISRIIIERPAKSIRVTIYTARPGIVIGKKGEDVEKLRISIAKITGVPVQINISEVRKPELDAKLVSDSITSQLERRVMFRRAMKRSVQNAMRQGAKGIKVEVSGRLGGAEIARREWYREGRVPLHTLRANIDYSISEAHTTYGVIGVKVWIFKGEILGGMETVERLDKPSVQTKKQYRKNRK.

The KH type-2 domain occupies 39-107 (VRQFLMKTLE…PVQINISEVR (69 aa)).

This sequence belongs to the universal ribosomal protein uS3 family. In terms of assembly, part of the 30S ribosomal subunit. Forms a tight complex with proteins S10 and S14.

In terms of biological role, binds the lower part of the 30S subunit head. Binds mRNA in the 70S ribosome, positioning it for translation. The protein is Small ribosomal subunit protein uS3 of Buchnera aphidicola subsp. Acyrthosiphon pisum (strain APS) (Acyrthosiphon pisum symbiotic bacterium).